The primary structure comprises 670 residues: DEAD-box ATP-dependent RNA helicase 16 (670 aa).

A compositionally biased stretch (low complexity) spans 1–10; sequence MAAAAAASSM. Residues 1–97 form a disordered region; sequence MAAAAAASSM…EEREVSFDEL (97 aa). 2 stretches are compositionally biased toward basic and acidic residues: residues 18 to 30 and 40 to 49; these read AATE…HDEA and NDGHTAHAAE. Residues 92 to 120 carry the Q motif motif; that stretch reads VSFDELGLDEQLKRALRKKGLDKATPIQR. The region spanning 123–306 is the Helicase ATP-binding domain; it reads IPLILEGKDV…KLLLHNPFIL (184 aa). Residue 136–143 participates in ATP binding; that stretch reads AKTGSGKT. Residues 254 to 257 carry the DEAD box motif; sequence DEAD. Residues 340-523 form the Helicase C-terminal domain; sequence LVLLKLELIQ…PFPLLTKNAV (184 aa). The tract at residues 616–670 is disordered; it reads DIDKPRRRKRMGFKGGSGRSSDPLKTFSAEGKSRRRGRKERDGEQDRRKRKKVES. The segment covering 654–670 has biased composition (basic and acidic residues); the sequence is KERDGEQDRRKRKKVES.

The protein belongs to the DEAD box helicase family. DDX56/DBP9 subfamily.

It catalyses the reaction ATP + H2O = ADP + phosphate + H(+). The sequence is that of DEAD-box ATP-dependent RNA helicase 16 from Oryza sativa subsp. japonica (Rice).